The chain runs to 192 residues: Large ribosomal subunit protein bL25 (192 aa).

This sequence belongs to the bacterial ribosomal protein bL25 family. CTC subfamily. As to quaternary structure, part of the 50S ribosomal subunit; part of the 5S rRNA/L5/L18/L25 subcomplex. Contacts the 5S rRNA. Binds to the 5S rRNA independently of L5 and L18.

In terms of biological role, this is one of the proteins that binds to the 5S RNA in the ribosome where it forms part of the central protuberance. In Solidesulfovibrio magneticus (strain ATCC 700980 / DSM 13731 / RS-1) (Desulfovibrio magneticus), this protein is Large ribosomal subunit protein bL25.